The primary structure comprises 535 residues: Phosphoenolpyruvate carboxykinase (ATP) (535 aa).

3 residues coordinate substrate: R59, Y201, and K207. Residues K207, H226, and 243-251 (GLSGTGKTT) each bind ATP. Mn(2+) contacts are provided by K207 and H226. D264 contributes to the Mn(2+) binding site. ATP is bound by residues E292, R328, 444–445 (RI), and T450. R328 provides a ligand contact to substrate.

This sequence belongs to the phosphoenolpyruvate carboxykinase (ATP) family. Mn(2+) serves as cofactor.

The protein localises to the cytoplasm. The catalysed reaction is oxaloacetate + ATP = phosphoenolpyruvate + ADP + CO2. The protein operates within carbohydrate biosynthesis; gluconeogenesis. Its function is as follows. Involved in the gluconeogenesis. Catalyzes the conversion of oxaloacetate (OAA) to phosphoenolpyruvate (PEP) through direct phosphoryl transfer between the nucleoside triphosphate and OAA. The polypeptide is Phosphoenolpyruvate carboxykinase (ATP) (Bacteroides thetaiotaomicron (strain ATCC 29148 / DSM 2079 / JCM 5827 / CCUG 10774 / NCTC 10582 / VPI-5482 / E50)).